The chain runs to 124 residues: MSSSSSSEDELEKKVTKEQKKKETKSKKRQSEAVEEEKQEVKKAKNEEEVSGRLKDSDGNEMFEIGNLRYATVSKFKGKEYVNIREYYIDRDSQKMMPSRKGISLSKAQWANLKDLIPEIDKKF.

The disordered stretch occupies residues 1 to 61; that stretch reads MSSSSSSEDE…GRLKDSDGNE (61 aa). Composition is skewed to basic and acidic residues over residues 11 to 21 and 39 to 58; these read LEKKVTKEQKK and QEVKKAKNEEEVSGRLKDSD.

This sequence belongs to the transcriptional coactivator PC4 family.

The protein resides in the nucleus. General coactivator that functions cooperatively with TAFs and mediates functional interactions between upstream activators and the general transcriptional machinery. Binds single-stranded DNA. The chain is Putative RNA polymerase II transcriptional coactivator from Caenorhabditis elegans.